The sequence spans 444 residues: MTTEGGPPPAPLRRACSPVPGALQAALMSPPPAAAAAAAAAPETTSSSSSSSSASCASSSSSSNSASAPSAACKSAGGGGAGAGSGGAKKASSGLRRPEKPPYSYIALIVMAIQSSPSKRLTLSEIYQFLQARFPFFRGAYQGWKNSVRHNLSLNECFIKLPKGLGRPGKGHYWTIDPASEFMFEEGSFRRRPRGFRRKCQALKPMYHRVVSGLGFGASLLPQGFDFQAPPSAPLGCHSQGGYGGLDMMPAGYDAGAGAPSHAHPHHHHHHHVPHMSPNPGSTYMASCPVPAGPGGVGAAGGGGGGDYGPDSSSSPVPSSPAMASAIECHSPYTSPAAHWSSPGASPYLKQPPALTPSSNPAASAGLHSSMSSYSLEQSYLHQNAREDLSVGLPRYQHHSTPVCDRKDFVLNFNGISSFHPSASGSYYHHHHQSVCQDIKPCVM.

The segment at 32 to 98 (PAAAAAAAAA…KKASSGLRRP (67 aa)) is disordered. The segment covering 34–75 (AAAAAAAAPETTSSSSSSSSASCASSSSSSNSASAPSAACKS) has biased composition (low complexity). Gly residues predominate over residues 76-87 (AGGGGAGAGSGG). The fork-head DNA-binding region spans 99 to 190 (EKPPYSYIAL…EFMFEEGSFR (92 aa)). Disordered regions lie at residues 256-323 (GAGA…SPAM) and 338-367 (AHWS…SAGL). Over residues 263-274 (AHPHHHHHHHVP) the composition is skewed to basic residues. The segment covering 293 to 308 (GPGGVGAAGGGGGGDY) has biased composition (gly residues). Positions 309-323 (GPDSSSSPVPSSPAM) are enriched in low complexity.

Interacts with the transcription factors TBP and TFIIB. Lung and placenta. Predominantly expressed in gastrointestinal tract including stomach.

It is found in the nucleus. Its function is as follows. Probable transcription activator for a number of lung-specific genes. Mediates up-regulation of the E3 ligase IRF2BPL and drives ubiquitination and degradation of CTNNB1. In Homo sapiens (Human), this protein is Forkhead box protein F2 (FOXF2).